Here is a 450-residue protein sequence, read N- to C-terminus: Protein tweety homolog 1 (450 aa).

Residues 1–43 (MGAPPGYRPSAWVHLLHQLPRADFQLRPVPSGFAPRDQEYQQA) are Extracellular-facing. A helical transmembrane segment spans residues 44–64 (LLLVAALAGLGLGLSLIFIAV). The Cytoplasmic segment spans residues 65–88 (YLIRFCCCRPPEPHGAKSPPPGGG). A helical transmembrane segment spans residues 89–109 (CVTWSCIAALLVGCAGIGIGF). At 110–214 (YGNSETSDGV…DVTFVEEYRW (105 aa)) the chain is on the extracellular side. N-linked (GlcNAc...) asparagine glycosylation is present at Asn130. A helical membrane pass occupies residues 215–235 (LAYVLLLLLVLLVCLFTLLGL). At 236–240 (AKQSK) the chain is on the cytoplasmic side. A helical membrane pass occupies residues 241 to 261 (WLVVVMTAMSLLVLVLSWGSM). Over 262–390 (GLEAATAVGL…LRGLCEDALE (129 aa)) the chain is Extracellular. 2 cysteine pairs are disulfide-bonded: Cys275-Cys385 and Cys303-Cys370. 2 N-linked (GlcNAc...) asparagine glycosylation sites follow: Asn284 and Asn355. A helical transmembrane segment spans residues 391–411 (GLLFLMLFSLLSAGALATTLC). Residues 412-450 (SLPRAWALFPPSDDYDDTDDDDPFNPQESKRFVQWQSSI) are Cytoplasmic-facing. The disordered stretch occupies residues 428 to 450 (DTDDDDPFNPQESKRFVQWQSSI). Ser440 is subject to Phosphoserine.

It belongs to the tweety family. Homotetramer; disulfide-linked. Homodimer. Post-translationally, N-glycosylated. Contains high-mannose, hybrid and complex oligosaccharides. As to expression, expressed in the astrocytes (at protein level). Restricted mainly to neural tissues. Strongly expressed in brain and eye.

The protein resides in the cell membrane. It carries out the reaction chloride(in) = chloride(out). The enzyme catalyses L-glutamate(out) = L-glutamate(in). With respect to regulation, inhibited by (4-[(2-butyl-6,7-dichloro-2- cyclopentyl-2,3-dihydro-1-oxo-1H-inden-5-yl)oxy]butanoic acid). Its function is as follows. Calcium-independent, swelling-dependent volume-regulated anion channel (VRAC-swell) which plays a pivotal role in the process of regulatory volume decrease (RVD) in the brain through the efflux of anions like chloride and organic osmolytes like glutamate. This Mus musculus (Mouse) protein is Protein tweety homolog 1 (Ttyh1).